Consider the following 252-residue polypeptide: dITP/XTP pyrophosphatase (252 aa).

7–12 is a binding site for substrate; that stretch reads THNEGK. D74 functions as the Proton acceptor in the catalytic mechanism. D74 provides a ligand contact to Mg(2+). Residues S75 and 193–196 each bind substrate; that span reads FGYD. The interval 202–229 is disordered; that stretch reads DDQPAGRVSTEPDHEGEPLTSAEMTPAE. Substrate is bound by residues K230 and 235–236; that span reads HR.

Belongs to the HAM1 NTPase family. As to quaternary structure, homodimer. Mg(2+) is required as a cofactor.

It carries out the reaction XTP + H2O = XMP + diphosphate + H(+). The enzyme catalyses dITP + H2O = dIMP + diphosphate + H(+). The catalysed reaction is ITP + H2O = IMP + diphosphate + H(+). Pyrophosphatase that catalyzes the hydrolysis of nucleoside triphosphates to their monophosphate derivatives, with a high preference for the non-canonical purine nucleotides XTP (xanthosine triphosphate), dITP (deoxyinosine triphosphate) and ITP. Seems to function as a house-cleaning enzyme that removes non-canonical purine nucleotides from the nucleotide pool, thus preventing their incorporation into DNA/RNA and avoiding chromosomal lesions. The chain is dITP/XTP pyrophosphatase from Bifidobacterium longum (strain NCC 2705).